Consider the following 104-residue polypeptide: MAAKIRRDDEVIVLTGKDKGKRGKVKNVLSSGKIIVEGINLVKKHQKPVPALNQPGGIVEKEAAIQVSNVALFNTVTGKADRVGFRFEDGKKVRFFKSNSETIK.

Belongs to the universal ribosomal protein uL24 family. In terms of assembly, part of the 50S ribosomal subunit.

Its function is as follows. One of two assembly initiator proteins, it binds directly to the 5'-end of the 23S rRNA, where it nucleates assembly of the 50S subunit. In terms of biological role, one of the proteins that surrounds the polypeptide exit tunnel on the outside of the subunit. The chain is Large ribosomal subunit protein uL24 from Enterobacter sp. (strain 638).